We begin with the raw amino-acid sequence, 87 residues long: Cell division topological specificity factor (87 aa).

It belongs to the MinE family.

In terms of biological role, prevents the cell division inhibition by proteins MinC and MinD at internal division sites while permitting inhibition at polar sites. This ensures cell division at the proper site by restricting the formation of a division septum at the midpoint of the long axis of the cell. This chain is Cell division topological specificity factor, found in Vibrio vulnificus (strain CMCP6).